Reading from the N-terminus, the 139-residue chain is Actin-depolymerizing factor 1 (139 aa).

Residues 5-139 (ASGMAVHDDC…DLDVFRSRAN (135 aa)) form the ADF-H domain. At Ser-6 the chain carries Phosphoserine; by CPK3.

Belongs to the actin-binding proteins ADF family. As to quaternary structure, interacts with the 14-3-3-like protein GRF6/AFT1. Post-translationally, phosphorylation at Ser-6 by CPK3/CDPK6 inhibits actin-depolimerizing activity. As to expression, expressed in vascular tissues of all organs.

Its subcellular location is the cytoplasm. It is found in the cytoskeleton. In terms of biological role, actin-depolymerizing protein. Stimulates F-actin depolymerization. Involved in plant development, cell organ expansion and flowering by controlling breakdown of thick actin cables. Severs actin filaments or bundles and promotes actin cytoskeleton disassembly. Binds monomeric actin (G-actin) with a marked preference for the ADP-loaded form and inhibits the rate of nucleotide exchange on G-actin. This is Actin-depolymerizing factor 1 (ADF1) from Arabidopsis thaliana (Mouse-ear cress).